Here is a 443-residue protein sequence, read N- to C-terminus: UDP-N-acetylmuramate--L-alanine ligase (443 aa).

Position 110 to 116 (110 to 116 (GAHGKTS)) interacts with ATP.

Belongs to the MurCDEF family.

Its subcellular location is the cytoplasm. The enzyme catalyses UDP-N-acetyl-alpha-D-muramate + L-alanine + ATP = UDP-N-acetyl-alpha-D-muramoyl-L-alanine + ADP + phosphate + H(+). It functions in the pathway cell wall biogenesis; peptidoglycan biosynthesis. Cell wall formation. This chain is UDP-N-acetylmuramate--L-alanine ligase, found in Streptococcus suis (strain 98HAH33).